The following is a 151-amino-acid chain: Large ribosomal subunit protein uL13 (151 aa).

Belongs to the universal ribosomal protein uL13 family. In terms of assembly, part of the 50S ribosomal subunit.

In terms of biological role, this protein is one of the early assembly proteins of the 50S ribosomal subunit, although it is not seen to bind rRNA by itself. It is important during the early stages of 50S assembly. This chain is Large ribosomal subunit protein uL13, found in Petrotoga mobilis (strain DSM 10674 / SJ95).